A 242-amino-acid polypeptide reads, in one-letter code: Probable transcriptional regulatory protein Cthe_2075 (242 aa).

It belongs to the TACO1 family.

The protein localises to the cytoplasm. The sequence is that of Probable transcriptional regulatory protein Cthe_2075 from Acetivibrio thermocellus (strain ATCC 27405 / DSM 1237 / JCM 9322 / NBRC 103400 / NCIMB 10682 / NRRL B-4536 / VPI 7372) (Clostridium thermocellum).